The sequence spans 65 residues: Large ribosomal subunit protein bL35 (65 aa).

Belongs to the bacterial ribosomal protein bL35 family.

The polypeptide is Large ribosomal subunit protein bL35 (Thermotoga petrophila (strain ATCC BAA-488 / DSM 13995 / JCM 10881 / RKU-1)).